We begin with the raw amino-acid sequence, 431 residues long: Mitochondrial distribution and morphology protein 12 (431 aa).

Positions 1-431 constitute an SMP-LTD domain; it reads MSIDLNWETL…VYPSFWTFLV (431 aa). 2 disordered regions span residues 68–153 and 209–289; these read DFYE…GVST and QSHT…PKPE. Acidic residues predominate over residues 69–96; the sequence is FYEDLDDDDGGSDEDDEGSNSCQTDEEN. A compositionally biased stretch (basic and acidic residues) spans 97–113; sequence EAAKTLRERRKMDRVER. Residues 115–129 show a composition bias toward polar residues; that stretch reads ANGSSNVSNPPSYTD. The span at 241-252 shows a compositional bias: low complexity; sequence SASTLAVSSSTT.

The protein belongs to the MDM12 family. As to quaternary structure, component of the ER-mitochondria encounter structure (ERMES) or MDM complex, composed of mmm1, mdm10, mdm12 and mdm34. A mmm1 homodimer associates with one molecule of mdm12 on each side in a pairwise head-to-tail manner, and the SMP-LTD domains of mmm1 and mdm12 generate a continuous hydrophobic tunnel for phospholipid trafficking.

The protein localises to the mitochondrion outer membrane. It localises to the endoplasmic reticulum membrane. Component of the ERMES/MDM complex, which serves as a molecular tether to connect the endoplasmic reticulum (ER) and mitochondria. Components of this complex are involved in the control of mitochondrial shape and protein biogenesis, and function in nonvesicular lipid trafficking between the ER and mitochondria. Mdm12 is required for the interaction of the ER-resident membrane protein mmm1 and the outer mitochondrial membrane-resident beta-barrel protein mdm10. The mdm12-mmm1 subcomplex functions in the major beta-barrel assembly pathway that is responsible for biogenesis of all mitochondrial outer membrane beta-barrel proteins, and acts in a late step after the SAM complex. The mdm10-mdm12-mmm1 subcomplex further acts in the TOM40-specific pathway after the action of the mdm12-mmm1 complex. Essential for establishing and maintaining the structure of mitochondria and maintenance of mtDNA nucleoids. In Sclerotinia sclerotiorum (strain ATCC 18683 / 1980 / Ss-1) (White mold), this protein is Mitochondrial distribution and morphology protein 12.